Here is a 473-residue protein sequence, read N- to C-terminus: MATATEQWVLVEMVQALYEAPAYHLILEGILILWIIRLLFSKTYKLQERSDLTVKEKEELIEEWQPEPLVPPVPKDHPALNYNIVSGPPSHKTVVNGKECINFASFNFLGLLDNPRVKAAALASLKKYGVGTCGPRGFYGTFDVHLDLEDRLAKFMKTEEAIIYSYGFATIASAIPAYSKRGDIVFVDRAACFAIQKGLQASRSDIKLFKHNDMADLERLLKEQEIEDQKNPRKARVTRRFIVVEGLYMNTGTICPLPELVKLKYKYKARIFLEESLSFGVLGEHGRGVTEHYGINIDDIDLISANMENALASIGGFCCGRSFVIDHQRLSGQGYCFSASLPPLLAAAAIEALNIMEENPGIFAVLKEKCGQIHKALQGISGLKVVGESLSPAFHLQLEESTGSREQDVRLLQEIVDQCMNRSIALTQARYLEKEEKCLPPPSIRVVVTVEQTEEELERAASTIKEVAQAVLL.

Topologically, residues 1-15 are lumenal; it reads MATATEQWVLVEMVQ. The tract at residues 1-66 is interaction with SPTLC2; that stretch reads MATATEQWVL…KEELIEEWQP (66 aa). A helical transmembrane segment spans residues 16–36; that stretch reads ALYEAPAYHLILEGILILWII. The Cytoplasmic portion of the chain corresponds to 37–473; the sequence is RLLFSKTYKL…IKEVAQAVLL (437 aa). Tyr-164 is modified (phosphotyrosine; by ABL).

The protein belongs to the class-II pyridoxal-phosphate-dependent aminotransferase family. As to quaternary structure, component of the serine palmitoyltransferase (SPT) complex, which is also composed of SPTLC2 or SPTLC3 and SPTSSA or SPTSSB. The heterodimer consisting of SPTLC1 and SPTLC2/SPTLC3 forms the catalytic core of the enzyme, while SPTSSA or SPTSSB subunits determine substrate specificity. SPT also interacts with ORMDL proteins, especially ORMDL3, which negatively regulate SPT activity in the presence of ceramides. Forms dimers of heterodimers with SPTLC2. Interacts with RTN4 (isoform B). It depends on pyridoxal 5'-phosphate as a cofactor. Post-translationally, phosphorylation at Tyr-164 inhibits activity and promotes cell survival. In terms of tissue distribution, widely expressed. Not detected in small intestine.

Its subcellular location is the endoplasmic reticulum membrane. The enzyme catalyses L-serine + hexadecanoyl-CoA + H(+) = 3-oxosphinganine + CO2 + CoA. The catalysed reaction is octadecanoyl-CoA + L-serine + H(+) = 3-oxoeicosasphinganine + CO2 + CoA. It carries out the reaction tetradecanoyl-CoA + L-serine + H(+) = 3-oxohexadecasphinganine + CO2 + CoA. It catalyses the reaction dodecanoyl-CoA + L-serine + H(+) = 3-oxotetradecasphinganine + CO2 + CoA. The protein operates within lipid metabolism; sphingolipid metabolism. Its activity is regulated as follows. SPT complex catalytic activity is negatively regulated by ORMDL proteins, including ORMDL3, in the presence of ceramides. This mechanism allows to maintain ceramide levels at sufficient concentrations for the production of complex sphingolipids, but which prevents the accumulation of ceramides to levels that trigger apoptosis. Functionally, component of the serine palmitoyltransferase multisubunit enzyme (SPT) that catalyzes the initial and rate-limiting step in sphingolipid biosynthesis by condensing L-serine and activated acyl-CoA (most commonly palmitoyl-CoA) to form long-chain bases. The SPT complex is also composed of SPTLC2 or SPTLC3 and SPTSSA or SPTSSB. Within this complex, the heterodimer with SPTLC2 or SPTLC3 forms the catalytic core. The composition of the serine palmitoyltransferase (SPT) complex determines the substrate preference. The SPTLC1-SPTLC2-SPTSSA complex shows a strong preference for C16-CoA substrate, while the SPTLC1-SPTLC3-SPTSSA isozyme uses both C14-CoA and C16-CoA as substrates, with a slight preference for C14-CoA. The SPTLC1-SPTLC2-SPTSSB complex shows a strong preference for C18-CoA substrate, while the SPTLC1-SPTLC3-SPTSSB isozyme displays an ability to use a broader range of acyl-CoAs, without apparent preference. Required for adipocyte cell viability and metabolic homeostasis. The sequence is that of Serine palmitoyltransferase 1 (SPTLC1) from Homo sapiens (Human).